Reading from the N-terminus, the 191-residue chain is Small ribosomal subunit protein uS10c (191 aa).

A chloroplast-targeting transit peptide spans 1–56; sequence MAVSTVSSFLLPSFGIPSSSPSSTRLKVSLLPSSSTHGGLSSCVLTKPSVSLTKVF.

This sequence belongs to the universal ribosomal protein uS10 family. In terms of assembly, part of the 30S ribosomal subunit.

The protein localises to the plastid. It is found in the chloroplast. This is Small ribosomal subunit protein uS10c (RPS10) from Arabidopsis thaliana (Mouse-ear cress).